The primary structure comprises 872 residues: Alanine--tRNA ligase (872 aa).

Residues His-561, His-565, Cys-662, and His-666 each coordinate Zn(2+).

The protein belongs to the class-II aminoacyl-tRNA synthetase family. Zn(2+) is required as a cofactor.

Its subcellular location is the cytoplasm. The catalysed reaction is tRNA(Ala) + L-alanine + ATP = L-alanyl-tRNA(Ala) + AMP + diphosphate. Functionally, catalyzes the attachment of alanine to tRNA(Ala) in a two-step reaction: alanine is first activated by ATP to form Ala-AMP and then transferred to the acceptor end of tRNA(Ala). Also edits incorrectly charged Ser-tRNA(Ala) and Gly-tRNA(Ala) via its editing domain. This is Alanine--tRNA ligase from Thiobacillus denitrificans (strain ATCC 25259 / T1).